We begin with the raw amino-acid sequence, 147 residues long: Hemoglobin subunit beta-2 (147 aa).

In terms of domain architecture, Globin spans 3–147 (EWTDSERAII…VVSALGRQYH (145 aa)). H64 and H93 together coordinate heme b.

This sequence belongs to the globin family. In terms of assembly, hb 3 is a heterotetramer of two alpha-2 and two beta-2 chains. In terms of tissue distribution, red blood cells.

Functionally, involved in oxygen transport from gills to the various peripheral tissues. In Arctogadus glacialis (Arctic cod), this protein is Hemoglobin subunit beta-2 (hbb2).